We begin with the raw amino-acid sequence, 145 residues long: MRATDKQRGFTLLEIMVVIVIIGVLASLVVPNLMGNKEKADKQKAVSDIVALENALDMYKLDNHHYPTTNQGLESLVEAPTLPPLAANYNKEGYIKRLPADPWGNDYVLVNPGEHGAYDLLSAGPDGEMGTEDDITNWGLSKKKK.

The propeptide at 1–9 (MRATDKQRG) is leader sequence. The residue at position 10 (Phe-10) is an N-methylphenylalanine. Residues 10 to 30 (FTLLEIMVVIVIIGVLASLVV) form a helical membrane-spanning segment. The tract at residues 123–145 (AGPDGEMGTEDDITNWGLSKKKK) is disordered.

It belongs to the GSP G family. Type II secretion system is composed of four main components: the outer membrane complex, the inner membrane complex, the cytoplasmic secretion ATPase and the periplasm-spanning pseudopilus. Forms homomultimers. In terms of processing, cleaved by the prepilin peptidase. Methylated by prepilin peptidase at the amino group of the N-terminal phenylalanine once the leader sequence is cleaved.

The protein resides in the cell inner membrane. Its function is as follows. Core component of the type II secretion system required for the energy-dependent secretion of extracellular factors such as proteases and toxins from the periplasm. Pseudopilin (pilin-like) protein that polymerizes to form the pseudopilus. Further polymerization triggers pseudopilus growth. This chain is Type II secretion system core protein G (gspG), found in Escherichia coli (strain K12).